The primary structure comprises 276 residues: Protease HtpX homolog (276 aa).

The helical transmembrane segment at 16–36 (LFIWFGGMIAGQTGMVIAFLV) threads the bilayer. Residue His-130 participates in Zn(2+) binding. The active site involves Glu-131. Residue His-134 coordinates Zn(2+). 2 helical membrane-spanning segments follow: residues 142 to 162 (IGTVAATIAGAIAMLANFGMF) and 173 to 193 (IFVMLALMFIMPMAASIIQMT). Glu-199 is a Zn(2+) binding site.

The protein belongs to the peptidase M48B family. It depends on Zn(2+) as a cofactor.

The protein localises to the cell inner membrane. This is Protease HtpX homolog from Sulfurovum sp. (strain NBC37-1).